The following is a 549-amino-acid chain: DDB1- and CUL4-associated factor 11 (549 aa).

The span at 1 to 24 (MGSRNSSSAGSGSLEPSEGLSRRG) shows a compositional bias: low complexity. The disordered stretch occupies residues 1-40 (MGSRNSSSAGSGSLEPSEGLSRRGAGLRRSEEEEEEDEDV). 2 positions are modified to phosphoserine: S73 and S75. Residues 80–89 (DSAWDGRLGD) show a composition bias toward basic and acidic residues. The segment at 80 to 100 (DSAWDGRLGDRYNPPVDATPD) is disordered. WD repeat units follow at residues 170 to 210 (TYSQ…HKFK), 216 to 258 (DVGW…TALD), 263 to 302 (ERRF…RTLQ), 305 to 345 (SHED…EDDP), 353 to 392 (GHQD…SREG), 435 to 480 (GVLH…KKLT), and 481 to 520 (NHKA…YFQD).

Interacts with DDB1 and CUL4A.

It functions in the pathway protein modification; protein ubiquitination. Functionally, may function as a substrate receptor for CUL4-DDB1 E3 ubiquitin-protein ligase complex. This chain is DDB1- and CUL4-associated factor 11 (Dcaf11), found in Rattus norvegicus (Rat).